A 154-amino-acid chain; its full sequence is Transcriptional repressor NrdR (154 aa).

The interval 1–22 (MRCPFCGNDDTQVKDSRPTEDN) is disordered. Residues 3–34 (CPFCGNDDTQVKDSRPTEDNSAIRRRRFCPAC) fold into a zinc finger. A compositionally biased stretch (basic and acidic residues) spans 11 to 22 (TQVKDSRPTEDN). The region spanning 49-139 (LTVVKSGGSR…VYKDFREVTD (91 aa)) is the ATP-cone domain.

The protein belongs to the NrdR family. Zn(2+) is required as a cofactor.

Negatively regulates transcription of bacterial ribonucleotide reductase nrd genes and operons by binding to NrdR-boxes. The protein is Transcriptional repressor NrdR of Rhodospirillum centenum (strain ATCC 51521 / SW).